Here is a 173-residue protein sequence, read N- to C-terminus: Crossover junction endodeoxyribonuclease RuvC (173 aa).

Catalysis depends on residues D8, E67, and D139. Mg(2+)-binding residues include D8, E67, and D139.

The protein belongs to the RuvC family. In terms of assembly, homodimer which binds Holliday junction (HJ) DNA. The HJ becomes 2-fold symmetrical on binding to RuvC with unstacked arms; it has a different conformation from HJ DNA in complex with RuvA. In the full resolvosome a probable DNA-RuvA(4)-RuvB(12)-RuvC(2) complex forms which resolves the HJ. Requires Mg(2+) as cofactor.

The protein localises to the cytoplasm. The catalysed reaction is Endonucleolytic cleavage at a junction such as a reciprocal single-stranded crossover between two homologous DNA duplexes (Holliday junction).. The RuvA-RuvB-RuvC complex processes Holliday junction (HJ) DNA during genetic recombination and DNA repair. Endonuclease that resolves HJ intermediates. Cleaves cruciform DNA by making single-stranded nicks across the HJ at symmetrical positions within the homologous arms, yielding a 5'-phosphate and a 3'-hydroxyl group; requires a central core of homology in the junction. The consensus cleavage sequence is 5'-(A/T)TT(C/G)-3'. Cleavage occurs on the 3'-side of the TT dinucleotide at the point of strand exchange. HJ branch migration catalyzed by RuvA-RuvB allows RuvC to scan DNA until it finds its consensus sequence, where it cleaves and resolves the cruciform DNA. This Shewanella sp. (strain MR-4) protein is Crossover junction endodeoxyribonuclease RuvC.